The following is a 718-amino-acid chain: Probable protein S-acyltransferase 19 (718 aa).

The next 2 membrane-spanning stretches (helical) occupy residues 16–36 (VVAI…FAPF) and 41–61 (IWEY…FVLY). The interval 100-125 (ETGSHLQSSPSVASRTSTLPNSSVKG) is disordered. A compositionally biased stretch (polar residues) spans 103-124 (SHLQSSPSVASRTSTLPNSSVK). One can recognise a DHHC domain in the interval 174-224 (LFCTLCNAEVRKFSKHCRSCDKCVDCFDHHCRWLNNCVGRKNYMTFISLMA). Cys204 acts as the S-palmitoyl cysteine intermediate in catalysis. The next 2 membrane-spanning stretches (helical) occupy residues 222–242 (LMAV…AVIV) and 277–297 (AVSM…MLLI). Disordered regions lie at residues 454-511 (SSVS…HVHE), 598-649 (PATT…QQQQ), and 664-718 (GPLV…GTRK). 2 stretches are compositionally biased toward polar residues: residues 479-488 (CRNSYAPSQG) and 598-626 (PATT…TQNP). Basic and acidic residues predominate over residues 673–687 (DGLRHDGDSGREGQD).

It belongs to the DHHC palmitoyltransferase family.

The protein localises to the cell membrane. It catalyses the reaction L-cysteinyl-[protein] + hexadecanoyl-CoA = S-hexadecanoyl-L-cysteinyl-[protein] + CoA. In terms of biological role, palmitoyl acyltransferase. This chain is Probable protein S-acyltransferase 19 (PAT19), found in Arabidopsis thaliana (Mouse-ear cress).